Reading from the N-terminus, the 459-residue chain is MHNIHRRHFLKAAGAVTAGLVTANIALNANASSVAPKPRVGKSVIGLIAPKMELVRVGFIGVGERGFSHVEQFCHLEGVELKAICDTHQAVIDRAVEHIVKQNRPKPAVYTGNDLSYRELLNRDDIDIVIISTPWEWHAPMAIDTMESGKHAFVEVPLALTVEECWQLVDTAERTQKNCMMMENVNYGREELMVLNMVRQGVFGELLHGEAAYIHELRWQMKEIDHKTGSWRTYWHTKRNGNLYPTHGLGPISQYMNINRGDRFDYLTSMSSPALGRALYAKREFPADHERNQLKYINGDMSTSLIKTVKGRTIMVQHDTTTPRPYSRHNLIQGTNGVFAGFPNRIAVEHGGFGKSYHEWDMDMQKWYDKYDHPLWQRIGKEAEINGGHGGMDFVMLWRMVYCLRNGEALDQDVYDGAAWSVVNILSEQSLNNRSNSVNFPDFTRGAWEHATPLGIVGA.

The segment at residues 1–31 (MHNIHRRHFLKAAGAVTAGLVTANIALNANA) is a signal peptide (tat-type signal). NAD(+)-binding positions include 64 to 65 (ER), aspartate 86, 135 to 138 (WEWH), 155 to 156 (EV), and asparagine 184. Substrate-binding positions include tyrosine 213, arginine 232, 244-247 (YPTH), and tyrosine 326. Position 244 (tyrosine 244) interacts with NAD(+).

This sequence belongs to the Gfo/Idh/MocA family. Glycosyl hydrolase 109 subfamily. Requires NAD(+) as cofactor. Predicted to be exported by the Tat system. The position of the signal peptide cleavage has not been experimentally proven.

Its function is as follows. Glycosidase. This Shewanella sp. (strain ANA-3) protein is Glycosyl hydrolase family 109 protein 1.